The sequence spans 332 residues: Glycerol-3-phosphate dehydrogenase [NAD(P)+] (332 aa).

Positions 11, 12, 32, 33, and 106 each coordinate NADPH. K106 and G136 together coordinate sn-glycerol 3-phosphate. Residue A140 coordinates NADPH. Sn-glycerol 3-phosphate is bound by residues K191, D244, S254, R255, and N256. K191 serves as the catalytic Proton acceptor. R255 contacts NADPH. NADPH contacts are provided by V280 and E282.

The protein belongs to the NAD-dependent glycerol-3-phosphate dehydrogenase family.

Its subcellular location is the cytoplasm. The catalysed reaction is sn-glycerol 3-phosphate + NAD(+) = dihydroxyacetone phosphate + NADH + H(+). It catalyses the reaction sn-glycerol 3-phosphate + NADP(+) = dihydroxyacetone phosphate + NADPH + H(+). Its pathway is membrane lipid metabolism; glycerophospholipid metabolism. In terms of biological role, catalyzes the reduction of the glycolytic intermediate dihydroxyacetone phosphate (DHAP) to sn-glycerol 3-phosphate (G3P), the key precursor for phospholipid synthesis. This Corynebacterium aurimucosum (strain ATCC 700975 / DSM 44827 / CIP 107346 / CN-1) (Corynebacterium nigricans) protein is Glycerol-3-phosphate dehydrogenase [NAD(P)+].